The sequence spans 392 residues: Protein FAM53C (392 aa).

At methionine 1 the chain carries N-acetylmethionine. Positions 78–119 (LRPPSRGNSPKEQPFSQVLRPEPPDPEKLPVPPAPPSKRHCR) are disordered. Positions 83-93 (RGNSPKEQPFS) are enriched in polar residues. Phosphoserine is present on residues serine 122, serine 162, serine 232, serine 234, serine 255, and serine 273. Disordered regions lie at residues 141–167 (LWTP…PKRV) and 204–294 (RPCA…EDPR). Residues 241–256 (ASRFLPSARSSPASSP) are compositionally biased toward low complexity. Over residues 278–294 (LDARKTGVKRRHEEDPR) the composition is skewed to basic and acidic residues. Phosphoserine is present on serine 299. Positions 341–364 (ASCSPTGGSSQVLSESEEEEEGAV) are disordered.

This sequence belongs to the FAM53 family.

In Homo sapiens (Human), this protein is Protein FAM53C.